The sequence spans 249 residues: Caffeoyl-CoA O-methyltransferase 1 (249 aa).

Position 23 (K23) interacts with substrate. S-adenosyl-L-methionine contacts are provided by residues T65, E87, 89–90 (GV), S95, D113, and A142. D165 contributes to the substrate binding site. D165 contributes to the a divalent metal cation binding site. D167 is a binding site for S-adenosyl-L-methionine. 2 residues coordinate a divalent metal cation: D191 and N192. A substrate-binding site is contributed by N196.

It belongs to the class I-like SAM-binding methyltransferase superfamily. Cation-dependent O-methyltransferase family. CCoAMT subfamily. It depends on a divalent metal cation as a cofactor. Mostly expressed in petal limbs and tubes, and, at low levels, in flower buds, stamens, pistils, stems, roots and leaves.

It is found in the cytoplasm. It localises to the cytosol. The catalysed reaction is (E)-caffeoyl-CoA + S-adenosyl-L-methionine = (E)-feruloyl-CoA + S-adenosyl-L-homocysteine + H(+). The enzyme catalyses (E)-5-hydroxyferuloyl-CoA + S-adenosyl-L-methionine = (E)-sinapoyl-CoA + S-adenosyl-L-homocysteine + H(+). It participates in aromatic compound metabolism; phenylpropanoid biosynthesis. Functionally, involved in the production of floral volatile phenylpropanoids in flowers of fragrant cultivars (e.g. cv. Mitchell and cv. V26) from cinnamic acid, a common precursor with the anthocyanin biosynthesis pathway involved in flower pigmentation. Methylates caffeoyl-CoA to feruloyl-CoA, also able to methylate 5-hydroxyferuloyl-CoA. The protein is Caffeoyl-CoA O-methyltransferase 1 of Petunia hybrida (Petunia).